The chain runs to 829 residues: Leucine--tRNA ligase (829 aa).

The 'HIGH' region motif lies at 40–50 (PYPSGNIHMGH). The 'KMSKS' region signature appears at 581 to 585 (KMSKS). Position 584 (Lys584) interacts with ATP.

The protein belongs to the class-I aminoacyl-tRNA synthetase family.

The protein resides in the cytoplasm. The enzyme catalyses tRNA(Leu) + L-leucine + ATP = L-leucyl-tRNA(Leu) + AMP + diphosphate. The chain is Leucine--tRNA ligase from Oleidesulfovibrio alaskensis (strain ATCC BAA-1058 / DSM 17464 / G20) (Desulfovibrio alaskensis).